The primary structure comprises 297 residues: Acetyl-coenzyme A carboxylase carboxyl transferase subunit beta (297 aa).

The CoA carboxyltransferase N-terminal domain maps to 27-296 (LWHKCPSCEA…PEEAREAAAV (270 aa)). 4 residues coordinate Zn(2+): Cys31, Cys34, Cys50, and Cys53. The C4-type zinc-finger motif lies at 31-53 (CPSCEAVLYRPELEKTLDVCPKC).

The protein belongs to the AccD/PCCB family. As to quaternary structure, acetyl-CoA carboxylase is a heterohexamer composed of biotin carboxyl carrier protein (AccB), biotin carboxylase (AccC) and two subunits each of ACCase subunit alpha (AccA) and ACCase subunit beta (AccD). Zn(2+) is required as a cofactor.

Its subcellular location is the cytoplasm. The enzyme catalyses N(6)-carboxybiotinyl-L-lysyl-[protein] + acetyl-CoA = N(6)-biotinyl-L-lysyl-[protein] + malonyl-CoA. Its pathway is lipid metabolism; malonyl-CoA biosynthesis; malonyl-CoA from acetyl-CoA: step 1/1. Its function is as follows. Component of the acetyl coenzyme A carboxylase (ACC) complex. Biotin carboxylase (BC) catalyzes the carboxylation of biotin on its carrier protein (BCCP) and then the CO(2) group is transferred by the transcarboxylase to acetyl-CoA to form malonyl-CoA. The polypeptide is Acetyl-coenzyme A carboxylase carboxyl transferase subunit beta (Pseudomonas putida (strain ATCC 700007 / DSM 6899 / JCM 31910 / BCRC 17059 / LMG 24140 / F1)).